Reading from the N-terminus, the 85-residue chain is uncharacterized protein (85 aa).

2 helical membrane-spanning segments follow: residues 12 to 34 (ICLS…VLAF) and 49 to 71 (IPEF…NGFV).

It localises to the cell membrane. This is an uncharacterized protein from Archaeoglobus fulgidus (strain ATCC 49558 / DSM 4304 / JCM 9628 / NBRC 100126 / VC-16).